Here is a 181-residue protein sequence, read N- to C-terminus: Peptidyl-tRNA hydrolase (181 aa).

Position 14 (Y14) interacts with tRNA. H19 functions as the Proton acceptor in the catalytic mechanism. Residues Y62, N64, and N108 each contribute to the tRNA site.

The protein belongs to the PTH family. As to quaternary structure, monomer.

The protein localises to the cytoplasm. It carries out the reaction an N-acyl-L-alpha-aminoacyl-tRNA + H2O = an N-acyl-L-amino acid + a tRNA + H(+). In terms of biological role, hydrolyzes ribosome-free peptidyl-tRNAs (with 1 or more amino acids incorporated), which drop off the ribosome during protein synthesis, or as a result of ribosome stalling. Catalyzes the release of premature peptidyl moieties from peptidyl-tRNA molecules trapped in stalled 50S ribosomal subunits, and thus maintains levels of free tRNAs and 50S ribosomes. This is Peptidyl-tRNA hydrolase from Campylobacter jejuni subsp. jejuni serotype O:2 (strain ATCC 700819 / NCTC 11168).